Consider the following 596-residue polypeptide: MRNIRNFSIIAHVDHGKSTLADRIIQLCGGLQAREMEAQVLDSNPIERERGITIKAQSVSLPYTAKDGQTYHLNFIDTPGHVDFSYEVSRSLAACEGALLVVDAAQGVEAQSVANCYTAVEQGLEVVPVLNKIDLPTADVDRAKAEIEAVIGIDAEDAVAVSAKTGLNIDLVLEAIVHRIPPPKPRETDKLQALIIDSWFDNYLGVVSLVRVMQGEIKPGSKILVMSTGRTHLVDKVGVFTPKRKELPALGAGEVGWINASIKDVHGAPVGDTLTLAGDPAPHALPGFQEMQPRVFAGLFPVDAEDYPDLREALDKLRLNDAALRFEPESSEAMGFGFRCGFLGMLHMEIVQERLEREYNLDLISTAPTVVYEVLKTDGTVINMDNPAKLPQLNLVQEIREPIIRANVLTPEEYIGNIIKLCEEKRGTQIGINYLGSQVQISYELPMAEVVLDFFDKLKSVSRGYASLDYHFVRFDAGPFVRVDVLINGDKVDALSLIVHRSHADRRGRELCEKMKDLIPRQMFDVAIQAAIGSQIISRSTVKAMRKNVLAKCYGGDVSRKKKLLEKQKEGKKRMKQVGRVEIPQEAFLAVLQMDK.

A tr-type G domain is found at 2-184 (RNIRNFSIIA…AIVHRIPPPK (183 aa)). GTP is bound by residues 14–19 (DHGKST) and 131–134 (NKID).

The protein belongs to the TRAFAC class translation factor GTPase superfamily. Classic translation factor GTPase family. LepA subfamily.

The protein resides in the cell inner membrane. The enzyme catalyses GTP + H2O = GDP + phosphate + H(+). Functionally, required for accurate and efficient protein synthesis under certain stress conditions. May act as a fidelity factor of the translation reaction, by catalyzing a one-codon backward translocation of tRNAs on improperly translocated ribosomes. Back-translocation proceeds from a post-translocation (POST) complex to a pre-translocation (PRE) complex, thus giving elongation factor G a second chance to translocate the tRNAs correctly. Binds to ribosomes in a GTP-dependent manner. This is Elongation factor 4 from Xanthomonas euvesicatoria pv. vesicatoria (strain 85-10) (Xanthomonas campestris pv. vesicatoria).